A 283-amino-acid polypeptide reads, in one-letter code: Pantothenate synthetase (283 aa).

30–37 (MGNLHSGH) provides a ligand contact to ATP. His37 acts as the Proton donor in catalysis. Gln61 is a (R)-pantoate binding site. Gln61 is a binding site for beta-alanine. An ATP-binding site is contributed by 149-152 (GEKD). Gln155 serves as a coordination point for (R)-pantoate. ATP contacts are provided by residues Val178 and 186 to 189 (LSSR).

This sequence belongs to the pantothenate synthetase family. Homodimer.

The protein localises to the cytoplasm. The enzyme catalyses (R)-pantoate + beta-alanine + ATP = (R)-pantothenate + AMP + diphosphate + H(+). Its pathway is cofactor biosynthesis; (R)-pantothenate biosynthesis; (R)-pantothenate from (R)-pantoate and beta-alanine: step 1/1. Its function is as follows. Catalyzes the condensation of pantoate with beta-alanine in an ATP-dependent reaction via a pantoyl-adenylate intermediate. This Pseudomonas savastanoi pv. phaseolicola (strain 1448A / Race 6) (Pseudomonas syringae pv. phaseolicola (strain 1448A / Race 6)) protein is Pantothenate synthetase.